The sequence spans 83 residues: Alpha-conotoxin QcIA (83 aa).

The signal sequence occupies residues 1 to 21 (MGMRMMFTLFLLAVLSTTVVS). A propeptide spanning residues 22-48 (FTLDRASNGRDAAADSKAADQIAQTVR) is cleaved from the precursor. 2 disulfide bridges follow: C51–C57 and C52–C65. The segment at 53–55 (SNP) is ser-Xaa-Pro motif, crucial for potent interaction with nAChR. Residues 66 to 83 (RRTLMLQNPLNHDMSPSA) constitute a propeptide that is removed on maturation.

It belongs to the conotoxin A superfamily. Expressed by the venom duct.

The protein resides in the secreted. Functionally, alpha-conotoxins bind to the nicotinic acetylcholine receptors (nAChR) and inhibit them. A synthetic amidated version of this toxin potently and preferentially antagonizes neuronal rat alpha-3-beta-2 (IC(50)=55.7 nM) and alpha-6/alpha-3-beta-4 (IC(50)=90.69 nM) nAChRs. The polypeptide is Alpha-conotoxin QcIA (Conus quercinus (Oak cone)).